A 210-amino-acid polypeptide reads, in one-letter code: UPF0173 protein PF0020 (210 aa).

Belongs to the UPF0173 family.

In Pyrococcus furiosus (strain ATCC 43587 / DSM 3638 / JCM 8422 / Vc1), this protein is UPF0173 protein PF0020.